Reading from the N-terminus, the 79-residue chain is Sec-independent protein translocase protein TatA (79 aa).

A helical membrane pass occupies residues 1–21 (MGGISIWQLLIIALIVILLFG). Residues 42-79 (AMTSETSEEEKKALEDSQTAQTSQQAEKKPESKDKEQA) form a disordered region. Residues 57-66 (DSQTAQTSQQ) are compositionally biased toward polar residues. The segment covering 67-79 (AEKKPESKDKEQA) has biased composition (basic and acidic residues).

This sequence belongs to the TatA/E family. As to quaternary structure, the Tat system comprises two distinct complexes: a TatABC complex, containing multiple copies of TatA, TatB and TatC subunits, and a separate TatA complex, containing only TatA subunits. Substrates initially bind to the TatABC complex, which probably triggers association of the separate TatA complex to form the active translocon.

It is found in the cell inner membrane. Part of the twin-arginine translocation (Tat) system that transports large folded proteins containing a characteristic twin-arginine motif in their signal peptide across membranes. TatA could form the protein-conducting channel of the Tat system. This Shewanella denitrificans (strain OS217 / ATCC BAA-1090 / DSM 15013) protein is Sec-independent protein translocase protein TatA.